Here is a 317-residue protein sequence, read N- to C-terminus: Mitochondrial thiamine pyrophosphate carrier 1 (317 aa).

A run of 6 helical transmembrane segments spans residues 15–37 (TVSWYNSVIAGSVSGVFARMATA), 80–100 (IPATAMYVVYGAVQFGSYSWF), 118–138 (LTVGALAGMTSSVVSYPLDLL), 168–190 (GFFTGISTAMTTVTLSTAIMFLT), 205–227 (FWSRPVSASSGIIAGFVSKTMVF), and 281–300 (GLTMGLCKSVPTTAISLFVY). Solcar repeat units lie at residues 16 to 103 (VSWY…FNNV), 112 to 197 (SQQG…VNIV), and 206 to 306 (WSRP…TMDL).

Belongs to the mitochondrial carrier (TC 2.A.29) family.

The protein localises to the mitochondrion inner membrane. Its function is as follows. Mitochondrial transporter that mediates uptake of thiamine pyrophosphate (ThPP) into mitochondria. This chain is Mitochondrial thiamine pyrophosphate carrier 1 (TPC1), found in Kluyveromyces lactis (strain ATCC 8585 / CBS 2359 / DSM 70799 / NBRC 1267 / NRRL Y-1140 / WM37) (Yeast).